Reading from the N-terminus, the 262-residue chain is Acyl-[acyl-carrier-protein]--UDP-N-acetylglucosamine O-acyltransferase (262 aa).

The protein belongs to the transferase hexapeptide repeat family. LpxA subfamily. Homotrimer.

The protein localises to the cytoplasm. The catalysed reaction is a (3R)-hydroxyacyl-[ACP] + UDP-N-acetyl-alpha-D-glucosamine = a UDP-3-O-[(3R)-3-hydroxyacyl]-N-acetyl-alpha-D-glucosamine + holo-[ACP]. It functions in the pathway glycolipid biosynthesis; lipid IV(A) biosynthesis; lipid IV(A) from (3R)-3-hydroxytetradecanoyl-[acyl-carrier-protein] and UDP-N-acetyl-alpha-D-glucosamine: step 1/6. Functionally, involved in the biosynthesis of lipid A, a phosphorylated glycolipid that anchors the lipopolysaccharide to the outer membrane of the cell. The chain is Acyl-[acyl-carrier-protein]--UDP-N-acetylglucosamine O-acyltransferase from Campylobacter curvus (strain 525.92).